We begin with the raw amino-acid sequence, 101 residues long: NAD(P)H-quinone oxidoreductase subunit 4L, chloroplastic (101 aa).

Transmembrane regions (helical) follow at residues 2–22 (ILEHVLVLSAYLFSIGIYGLI), 32–52 (MCLELILNAVNINFVTFSDFF), and 61–81 (IFSIFVIAIAAAEAAIGLAIV).

The protein belongs to the complex I subunit 4L family. As to quaternary structure, NDH is composed of at least 16 different subunits, 5 of which are encoded in the nucleus.

The protein localises to the plastid. Its subcellular location is the chloroplast thylakoid membrane. It carries out the reaction a plastoquinone + NADH + (n+1) H(+)(in) = a plastoquinol + NAD(+) + n H(+)(out). The enzyme catalyses a plastoquinone + NADPH + (n+1) H(+)(in) = a plastoquinol + NADP(+) + n H(+)(out). Functionally, NDH shuttles electrons from NAD(P)H:plastoquinone, via FMN and iron-sulfur (Fe-S) centers, to quinones in the photosynthetic chain and possibly in a chloroplast respiratory chain. The immediate electron acceptor for the enzyme in this species is believed to be plastoquinone. Couples the redox reaction to proton translocation, and thus conserves the redox energy in a proton gradient. This Eucalyptus globulus subsp. globulus (Tasmanian blue gum) protein is NAD(P)H-quinone oxidoreductase subunit 4L, chloroplastic.